A 308-amino-acid polypeptide reads, in one-letter code: Oxygen-dependent coproporphyrinogen-III oxidase (308 aa).

Ser-97 provides a ligand contact to substrate. His-101 and His-111 together coordinate a divalent metal cation. His-111 serves as the catalytic Proton donor. Residue 113-115 (NVR) participates in substrate binding. His-153 and His-183 together coordinate a divalent metal cation. The tract at residues 248 to 283 (YVEFNLVWDRGTHFGLQSGGRTESILMSMPPLASWS) is important for dimerization. Residue 266-268 (GGR) participates in substrate binding.

This sequence belongs to the aerobic coproporphyrinogen-III oxidase family. As to quaternary structure, homodimer. It depends on a divalent metal cation as a cofactor.

The protein localises to the cytoplasm. It carries out the reaction coproporphyrinogen III + O2 + 2 H(+) = protoporphyrinogen IX + 2 CO2 + 2 H2O. The protein operates within porphyrin-containing compound metabolism; protoporphyrin-IX biosynthesis; protoporphyrinogen-IX from coproporphyrinogen-III (O2 route): step 1/1. Involved in the heme biosynthesis. Catalyzes the aerobic oxidative decarboxylation of propionate groups of rings A and B of coproporphyrinogen-III to yield the vinyl groups in protoporphyrinogen-IX. The polypeptide is Oxygen-dependent coproporphyrinogen-III oxidase (Polaromonas sp. (strain JS666 / ATCC BAA-500)).